A 557-amino-acid polypeptide reads, in one-letter code: Polypyrimidine tract-binding protein 1 (557 aa).

At M1 the chain carries N-acetylmethionine. A Phosphoserine modification is found at S16. RRM domains follow at residues 59 to 143, 184 to 260, and 363 to 437; these read RVIH…SSPN, LRII…FSKL, and SVLL…LSKH. K65 is covalently cross-linked (Glycyl lysine isopeptide (Lys-Gly) (interchain with G-Cter in SUMO2)). Y127 carries the phosphotyrosine modification. Residue T138 is modified to Phosphothreonine. The residue at position 141 (S141) is a Phosphoserine. A Glycyl lysine isopeptide (Lys-Gly) (interchain with G-Cter in SUMO2) cross-link involves residue K218. The segment at 437-460 is disordered; that stretch reads HQSVQLPREGQEDQGLTKDYGNSP. S459 bears the Phosphoserine mark. Residues 480–555 form the RRM 4 domain; the sequence is ATLHLSNIPP…HHLRVSFSKS (76 aa).

In terms of assembly, monomer. Part of a ternary complex containing KHSRP, PTBP1, PTBP2 and HNRPH1. Interacts with RAVER1 and SFPQ.

It is found in the nucleus. In terms of biological role, plays a role in pre-mRNA splicing and in the regulation of alternative splicing events. Activates exon skipping of its own pre-mRNA during muscle cell differentiation. Binds to the polypyrimidine tract of introns. May promote RNA looping when bound to two separate polypyrimidine tracts in the same pre-mRNA. May promote the binding of U2 snRNP to pre-mRNA. Cooperates with RAVER1 to modulate switching between mutually exclusive exons during maturation of the TPM1 pre-mRNA. Represses the splicing of MAPT/Tau exon 10. Binds to polypyrimidine-rich controlling element (PCE) of CFTR and promotes exon skipping of CFTR exon 9, thereby antagonizing TIA1 and its role in exon inclusion of CFTR exon 9. Plays a role in the splicing of pyruvate kinase PKM by binding repressively to a polypyrimidine tract flanking PKM exon 9, inhibiting exon 9 inclusion and resulting in exon 10 inclusion and production of the PKM M2 isoform. The sequence is that of Polypyrimidine tract-binding protein 1 (PTBP1) from Bos taurus (Bovine).